The sequence spans 152 residues: Superoxide dismutase [Cu-Zn] 4A (152 aa).

Residues His-45, His-47, and His-62 each contribute to the Cu cation site. The cysteines at positions 56 and 145 are disulfide-linked. Positions 62, 70, 79, and 82 each coordinate Zn(2+). His-119 is a binding site for Cu cation.

The protein belongs to the Cu-Zn superoxide dismutase family. As to quaternary structure, homodimer. Cu cation is required as a cofactor. The cofactor is Zn(2+).

The protein resides in the cytoplasm. The catalysed reaction is 2 superoxide + 2 H(+) = H2O2 + O2. Its function is as follows. Destroys radicals which are normally produced within the cells and which are toxic to biological systems. The chain is Superoxide dismutase [Cu-Zn] 4A (SODCC.3) from Zea mays (Maize).